Here is a 406-residue protein sequence, read N- to C-terminus: Cytochrome P450 165C4 (406 aa).

Cys-356 is a binding site for heme.

Belongs to the cytochrome P450 family. Requires heme as cofactor.

Its pathway is antibiotic biosynthesis; vancomycin biosynthesis. Its function is as follows. Involved in the coupling of aromatic side chains of the heptapeptide of vancomycin. This is Cytochrome P450 165C4 (cyp165C4) from Amycolatopsis orientalis (Nocardia orientalis).